Consider the following 523-residue polypeptide: Probable methylmalonate-semialdehyde/malonate-semialdehyde dehydrogenase [acylating], mitochondrial (523 aa).

The N-terminal 22 residues, 1–22, are a transit peptide targeting the mitochondrion; sequence MLSRLARVQPKCQQLAHFSTSK. NAD(+)-binding residues include F175, K199, and E202. C307 functions as the Nucleophile in the catalytic mechanism. E407 is a binding site for NAD(+).

It belongs to the aldehyde dehydrogenase family. In terms of assembly, homodimer.

The protein resides in the mitochondrion. The enzyme catalyses 2-methyl-3-oxopropanoate + NAD(+) + CoA + H2O = propanoyl-CoA + hydrogencarbonate + NADH + H(+). It carries out the reaction 3-oxopropanoate + NAD(+) + CoA + H2O = hydrogencarbonate + acetyl-CoA + NADH + H(+). Probable malonate and methylmalonate semialdehyde dehydrogenase involved in the catabolism of valine, thymine, and compounds catabolized by way of beta-alanine, including uracil and cytidine. In Caenorhabditis elegans, this protein is Probable methylmalonate-semialdehyde/malonate-semialdehyde dehydrogenase [acylating], mitochondrial (alh-8).